Consider the following 158-residue polypeptide: 2-C-methyl-D-erythritol 2,4-cyclodiphosphate synthase (158 aa).

D8 and H10 together coordinate a divalent metal cation. Residues 8-10 (DVH) and 34-35 (HS) each bind 4-CDP-2-C-methyl-D-erythritol 2-phosphate. H42 lines the a divalent metal cation pocket. Residues 56–58 (DIG), 61–65 (FPDTD), 100–106 (AQKPKML), 132–135 (TTEE), and F139 each bind 4-CDP-2-C-methyl-D-erythritol 2-phosphate.

This sequence belongs to the IspF family. Homotrimer. A divalent metal cation serves as cofactor.

The enzyme catalyses 4-CDP-2-C-methyl-D-erythritol 2-phosphate = 2-C-methyl-D-erythritol 2,4-cyclic diphosphate + CMP. Its pathway is isoprenoid biosynthesis; isopentenyl diphosphate biosynthesis via DXP pathway; isopentenyl diphosphate from 1-deoxy-D-xylulose 5-phosphate: step 4/6. Its function is as follows. Involved in the biosynthesis of isopentenyl diphosphate (IPP) and dimethylallyl diphosphate (DMAPP), two major building blocks of isoprenoid compounds. Catalyzes the conversion of 4-diphosphocytidyl-2-C-methyl-D-erythritol 2-phosphate (CDP-ME2P) to 2-C-methyl-D-erythritol 2,4-cyclodiphosphate (ME-CPP) with a corresponding release of cytidine 5-monophosphate (CMP). The protein is 2-C-methyl-D-erythritol 2,4-cyclodiphosphate synthase of Clostridium beijerinckii (strain ATCC 51743 / NCIMB 8052) (Clostridium acetobutylicum).